The sequence spans 320 residues: AA9 family lytic polysaccharide monooxygenase-like protein CEL1 (320 aa).

The signal sequence occupies residues 1 to 29 (MRLPSRQQVLKMLATFSLALGLFAAKVQA). Disulfide bonds link Cys-78/Cys-199 and Cys-121/Cys-126. His-109 provides a ligand contact to Cu(2+). A glycan (N-linked (GlcNAc...) asparagine) is linked at Asn-163. The O2 site is built by His-189 and Gln-194. Tyr-196 is a Cu(2+) binding site. The interval 255–284 (GSGGNGGSPTTTPHTTTPITTSPPPTSTPG) is disordered. The span at 262–274 (SPTTTPHTTTPIT) shows a compositional bias: low complexity. Residues 284–320 (GTIPQYGQCGGIGWTGGTGCVAPYQCKVINDYYSQCL) form the CBM1 domain.

This sequence belongs to the polysaccharide monooxygenase AA9 family. Requires Cu(2+) as cofactor.

The protein localises to the secreted. It carries out the reaction [(1-&gt;4)-beta-D-glucosyl]n+m + reduced acceptor + O2 = 4-dehydro-beta-D-glucosyl-[(1-&gt;4)-beta-D-glucosyl]n-1 + [(1-&gt;4)-beta-D-glucosyl]m + acceptor + H2O.. Its function is as follows. Lytic polysaccharide monooxygenase (LPMO)-like protein that binds strongly to cellulose. Seems not to acts as an endoglucanase, a ceUobiohydrolase able to hydrolyze fluorogenic cellobiosides, a /3-glucosidase, a xylanase, nor a cellobiose:quinone oxidoreductase. The protein is AA9 family lytic polysaccharide monooxygenase-like protein CEL1 of Agaricus bisporus (White button mushroom).